The chain runs to 499 residues: MINYSSCSYLLKLCRTLKHLHQFHAQFITSGRISNDFKQNSVFANVLFAITSISPSASASKEVVSYATSVFRFITNPSTFCFNTIIRICTLHEPSSLSSKRFFVEMRRRSVPPDFHTFPFVFKACAAKKNGDLTLVKTLHCQALRFGLLSDLFTLNTLIRVYSLIAPIDSALQLFDENPQRDVVTYNVLIDGLVKAREIVRARELFDSMPLRDLVSWNSLISGYAQMNHCREAIKLFDEMVALGLKPDNVAIVSTLSACAQSGDWQKGKAIHDYTKRKRLFIDSFLATGLVDFYAKCGFIDTAMEIFELCSDKTLFTWNAMITGLAMHGNGELTVDYFRKMVSSGIKPDGVTFISVLVGCSHSGLVDEARNLFDQMRSLYDVNREMKHYGCMADLLGRAGLIEEAAEMIEQMPKDGGNREKLLAWSGLLGGCRIHGNIEIAEKAANRVKALSPEDGGVYKVMVEMYANAERWEEVVKVREIIDRDKKVKKNVGFSKVLS.

PPR repeat units lie at residues 78–113 (STFCFNTIIRICTLHEPSSLSSKRFFVEMRRRSVPP), 114–150 (DFHTFPFVFKACAAKKNGDLTLVKTLHCQALRFGLLS), 151–181 (DLFTLNTLIRVYSLIAPIDSALQLFDENPQR), 182–212 (DVVTYNVLIDGLVKAREIVRARELFDSMPLR), 213–247 (DLVSWNSLISGYAQMNHCREAIKLFDEMVALGLKP), 248–282 (DNVAIVSTLSACAQSGDWQKGKAIHDYTKRKRLFI), 283–313 (DSFLATGLVDFYAKCGFIDTAMEIFELCSDK), 314–348 (TLFTWNAMITGLAMHGNGELTVDYFRKMVSSGIKP), 349–379 (DGVTFISVLVGCSHSGLVDEARNLFDQMRSL), and 385–419 (EMKHYGCMADLLGRAGLIEEAAEMIEQMPKDGGNR). Residues 424-499 (AWSGLLGGCR…KNVGFSKVLS (76 aa)) form a type E motif region.

This sequence belongs to the PPR family. PCMP-E subfamily.

The sequence is that of Pentatricopeptide repeat-containing protein At5g61800 (PCMP-E8) from Arabidopsis thaliana (Mouse-ear cress).